We begin with the raw amino-acid sequence, 62 residues long: MTIAFELSVFALITISFLLVIGVPVVLASPDGWSSSKNIVFSGASLWIGLVFLVGILNSLIS.

A run of 2 helical transmembrane segments spans residues 8-28 (SVFALITISFLLVIGVPVVLA) and 41-61 (FSGASLWIGLVFLVGILNSLI).

The protein belongs to the PsbZ family. PSII is composed of 1 copy each of membrane proteins PsbA, PsbB, PsbC, PsbD, PsbE, PsbF, PsbH, PsbI, PsbJ, PsbK, PsbL, PsbM, PsbT, PsbY, PsbZ, Psb30/Ycf12, at least 3 peripheral proteins of the oxygen-evolving complex and a large number of cofactors. It forms dimeric complexes.

The protein localises to the plastid. The protein resides in the chloroplast thylakoid membrane. Its function is as follows. May control the interaction of photosystem II (PSII) cores with the light-harvesting antenna, regulates electron flow through the 2 photosystem reaction centers. PSII is a light-driven water plastoquinone oxidoreductase, using light energy to abstract electrons from H(2)O, generating a proton gradient subsequently used for ATP formation. In Psilotum nudum (Whisk fern), this protein is Photosystem II reaction center protein Z.